The sequence spans 1050 residues: Beta-galactosidase (1050 aa).

Asn110 and Asp209 together coordinate substrate. Asp209 serves as a coordination point for Na(+). The Mg(2+) site is built by Glu432, His434, and Glu477. Substrate-binding positions include Glu477 and 553 to 556 (EYAH). Glu477 functions as the Proton donor in the catalytic mechanism. Glu553 acts as the Nucleophile in catalysis. Mg(2+) is bound at residue Asn613. Positions 617 and 620 each coordinate Na(+). Residues Asn620 and Trp1023 each coordinate substrate.

This sequence belongs to the glycosyl hydrolase 2 family. As to quaternary structure, homotetramer. Requires Mg(2+) as cofactor. The cofactor is Na(+).

The enzyme catalyses Hydrolysis of terminal non-reducing beta-D-galactose residues in beta-D-galactosides.. This Yersinia enterocolitica serotype O:8 / biotype 1B (strain NCTC 13174 / 8081) protein is Beta-galactosidase.